We begin with the raw amino-acid sequence, 616 residues long: DNA-binding protein RFX5 (616 aa).

The interval 1 to 29 (MAEDEPDAKSPKTGGRAPPGGAEAGEPTT) is disordered. Ala-2 is subject to N-acetylalanine. Ser-10 carries the phosphoserine modification. The segment covering 13–29 (TGGRAPPGGAEAGEPTT) has biased composition (low complexity). Positions 25 to 90 (GEPTTLLQRL…PSTLSNEEYM (66 aa)) are N-terminal domain. The tract at residues 62–66 (LYLYL) is leucine-rich region; critical for dimer formation and for interaction with RFXAP. A DNA-binding region (RFX-type winged-helix) is located at residues 92-168 (AYRWIRNHLE…YCYSGIRRKT (77 aa)). The short motif at 173–178 (PPLPGL) is the PxLPxI/L motif; mediates interaction with RFXANK element. Ser-185 is modified (phosphoserine). Disordered stretches follow at residues 252–314 (AEED…ESSA) and 391–616 (LPGP…ATPP). Residues 276–293 (GAHKKPERLAQPPKDLEA) show a composition bias toward basic and acidic residues. Over residues 391-401 (LPGPGPGPGRA) the composition is skewed to pro residues. A compositionally biased stretch (basic and acidic residues) spans 424–434 (GPHDKGVKRTA). Basic residues predominate over residues 463-473 (KRKRGRPRKKS). Residues 534-546 (QGDGTVSKGGRGP) show a composition bias toward gly residues. Positions 606–616 (QEHKDPKATPP) are enriched in basic and acidic residues.

This sequence belongs to the RFX family. Homodimer. The RFX heterotetrameric complex consists of 2 molecules of RFX5 and one each of RFXAP and RFX-B/RFXANK; with each subunit representing a separate complementation group. Interacts (via PxLPxI/L motif) with RFXANK (via ankyrin repeats); the interaction is direct. RFX forms cooperative DNA binding complexes with X2BP and CBF/NF-Y. RFX associates with CIITA to form an active transcriptional complex. In terms of processing, phosphorylated. As to expression, ubiquitous.

The protein resides in the nucleus. In terms of biological role, activates transcription from class II MHC promoters. Recognizes X-boxes. Mediates cooperative binding between RFX and NF-Y. RFX binds the X1 box of MHC-II promoters. The protein is DNA-binding protein RFX5 (RFX5) of Homo sapiens (Human).